We begin with the raw amino-acid sequence, 1678 residues long: Clathrin heavy chain (1678 aa).

WD40-like repeat stretches follow at residues 24–67 (SFSF…RPIS), 68–107 (ADSAIMNPASKVIALKAQKTLQIFNIEMKSKMKAHTMNED), 108–149 (VVFW…SSLN), 150–195 (GCQI…QAIE), 196–257 (GHAA…PEAQ), 258–301 (NDFP…ISAD), and 302–330 (TIFVTAPHEASGGIIGVNRKGQVLSVTVD). CHCR repeat units follow at residues 538–684 (VAEE…QICV), 687–829 (ATKY…SEDI), 834–973 (ILVV…QLID), 980–1125 (LSET…VKEA), 1129–1270 (YIKA…FRLA), 1275–1421 (LHIV…LLLN), and 1424–1567 (LLVL…YDCF). Residues 1334 to 1643 (REHLELFWSR…IQMEPQLMIT (310 aa)) form an involved in binding clathrin light chain region. The tract at residues 1552–1677 (EELLGWFLER…AGGRNMGYPY (126 aa)) is trimerization.

The protein belongs to the clathrin heavy chain family. As to quaternary structure, clathrin triskelions, composed of 3 heavy chains and 3 light chains, are the basic subunits of the clathrin coat. Interacts with sau.

It localises to the cytoplasmic vesicle membrane. The protein localises to the membrane. Its subcellular location is the coated pit. Clathrin is the major protein of the polyhedral coat of coated pits and vesicles. The protein is Clathrin heavy chain (Chc) of Drosophila melanogaster (Fruit fly).